The following is a 586-amino-acid chain: Arginine--tRNA ligase (586 aa).

The 'HIGH' region motif lies at Ala-133–Ser-143.

The protein belongs to the class-I aminoacyl-tRNA synthetase family. Monomer.

Its subcellular location is the cytoplasm. It carries out the reaction tRNA(Arg) + L-arginine + ATP = L-arginyl-tRNA(Arg) + AMP + diphosphate. The protein is Arginine--tRNA ligase of Leptospira borgpetersenii serovar Hardjo-bovis (strain JB197).